Here is a 327-residue protein sequence, read N- to C-terminus: Ribosomal RNA small subunit methyltransferase H (327 aa).

Residues 42-44, aspartate 61, leucine 95, aspartate 109, and glutamine 116 each bind S-adenosyl-L-methionine; that span reads GGH.

The protein belongs to the methyltransferase superfamily. RsmH family.

It is found in the cytoplasm. The enzyme catalyses cytidine(1402) in 16S rRNA + S-adenosyl-L-methionine = N(4)-methylcytidine(1402) in 16S rRNA + S-adenosyl-L-homocysteine + H(+). Its function is as follows. Specifically methylates the N4 position of cytidine in position 1402 (C1402) of 16S rRNA. This is Ribosomal RNA small subunit methyltransferase H from Desulfovibrio desulfuricans (strain ATCC 27774 / DSM 6949 / MB).